The following is a 328-amino-acid chain: Lipoyl synthase (328 aa).

Cysteine 57, cysteine 62, cysteine 68, cysteine 83, cysteine 87, cysteine 90, and serine 298 together coordinate [4Fe-4S] cluster. The Radical SAM core domain maps to 69-287 (WSRGTATFML…REEGLSLGFL (219 aa)).

This sequence belongs to the radical SAM superfamily. Lipoyl synthase family. It depends on [4Fe-4S] cluster as a cofactor.

Its subcellular location is the cytoplasm. It catalyses the reaction [[Fe-S] cluster scaffold protein carrying a second [4Fe-4S](2+) cluster] + N(6)-octanoyl-L-lysyl-[protein] + 2 oxidized [2Fe-2S]-[ferredoxin] + 2 S-adenosyl-L-methionine + 4 H(+) = [[Fe-S] cluster scaffold protein] + N(6)-[(R)-dihydrolipoyl]-L-lysyl-[protein] + 4 Fe(3+) + 2 hydrogen sulfide + 2 5'-deoxyadenosine + 2 L-methionine + 2 reduced [2Fe-2S]-[ferredoxin]. It participates in protein modification; protein lipoylation via endogenous pathway; protein N(6)-(lipoyl)lysine from octanoyl-[acyl-carrier-protein]: step 2/2. Catalyzes the radical-mediated insertion of two sulfur atoms into the C-6 and C-8 positions of the octanoyl moiety bound to the lipoyl domains of lipoate-dependent enzymes, thereby converting the octanoylated domains into lipoylated derivatives. This Deinococcus geothermalis (strain DSM 11300 / CIP 105573 / AG-3a) protein is Lipoyl synthase.